Consider the following 188-residue polypeptide: Surfactant protein C (188 aa).

A propeptide spanning residues 1–23 (MDMGSKEALMESPPDYSAAPRGR) is cleaved from the precursor. S-palmitoyl cysteine attachment occurs at residues C28 and C29. Positions 59–188 (HMSQKHTEMV…LCGEVPLIYI (130 aa)) are excised as a propeptide. A BRICHOS domain is found at 94–188 (FPIGSTGIVT…LCGEVPLIYI (95 aa)). C121 and C180 are joined by a disulfide. The tract at residues 144 to 164 (NPAEPPTQRGQDKGPAAGPAS) is disordered.

It localises to the secreted. Its subcellular location is the extracellular space. The protein resides in the surface film. Its function is as follows. Pulmonary surfactant associated proteins promote alveolar stability by lowering the surface tension at the air-liquid interface in the peripheral air spaces. This Oryctolagus cuniculus (Rabbit) protein is Surfactant protein C (SFTPC).